A 654-amino-acid chain; its full sequence is Sucrose:sucrose 1-fructosyltransferase (654 aa).

The propeptide occupies 1-106; the sequence is MESSAVVPGT…VSEKASGAYS (106 aa). N32 is a glycosylation site (N-linked (GlcNAc...) asparagine). D136 is a catalytic residue. N-linked (GlcNAc...) asparagine glycans are attached at residues N328, N457, N491, N506, and N625.

This sequence belongs to the glycosyl hydrolase 32 family. In terms of assembly, monomer. Accumulates at the base of growing leaves.

Its subcellular location is the vacuole. It carries out the reaction 2 sucrose = 1(F)-beta-D-fructosylsucrose + D-glucose. Functionally, transferase involved in fructan biosynthesis that catalyzes the production of 1-kestose (fructose and nystose to a lower extent) from sucrose. Also exhibits some hydrolase activity toward 1-kestose, thus producing fructose and sucrose. A weak fructosyltransferase activity leads to the formation of nystose from 1-kestose. The polypeptide is Sucrose:sucrose 1-fructosyltransferase (1-SST) (Festuca arundinacea (Tall fescue)).